The primary structure comprises 253 residues: uncharacterized protein (253 aa).

2 consecutive C2HC LYAR-type zinc fingers follow at residues 1-26 and 27-51; these read MVFF…FQCR and NTTF…VKCI. Zn(2+) contacts are provided by cysteine 6, cysteine 9, histidine 21, cysteine 25, cysteine 32, cysteine 35, histidine 47, and cysteine 50. A coiled-coil region spans residues 136 to 171; that stretch reads AAEADKMREEAIRKQEETQKMEKAQKEAAAAAKKET.

It localises to the nucleus. This is an uncharacterized protein from Caenorhabditis elegans.